We begin with the raw amino-acid sequence, 460 residues long: Cysteine--tRNA ligase (460 aa).

Zn(2+) is bound at residue Cys-28. The 'HIGH' region signature appears at 30-40; the sequence is MTVYDYCHLGH. Residues Cys-209, His-234, and Glu-238 each coordinate Zn(2+). The 'KMSKS' region motif lies at 266 to 270; that stretch reads KMSKS. Lys-269 serves as a coordination point for ATP.

This sequence belongs to the class-I aminoacyl-tRNA synthetase family. As to quaternary structure, monomer. Requires Zn(2+) as cofactor.

It is found in the cytoplasm. It carries out the reaction tRNA(Cys) + L-cysteine + ATP = L-cysteinyl-tRNA(Cys) + AMP + diphosphate. The polypeptide is Cysteine--tRNA ligase (Pseudomonas fluorescens (strain ATCC BAA-477 / NRRL B-23932 / Pf-5)).